The chain runs to 1740 residues: MAVEKVMKRDGRIVPFDESRIRWAVQRAMWEVGIRDEKKLDEVVKSIVQRINELYDGKIPHIENIQDIVELELMRAGLFEVAKAYILYRKKKAEIREEKKRILNKKELDEIDKRFSINALRVLASRYLKKDENGNIVESPRELFERVAILAVIPDLLYDERVFDKNGNYSQDLKRVEYYLEHFEEFDRKYSIGKYKLNKYHFERMVNLYKELAEQGKMKVSIDEFLAMLEKGEFNEYEKEINEYFRLMTNQIFMPNTPALINSGRPLGMLSACFVVPIEDDMESIMKAAHDVAMIQKMGGGCIDGKAKIIFENEGEEHLTTMEEMYERYKHLGEFYDEEYNRWGIDVSNVPIYVKSFDPESKRVVKGKVNVIWKYELGKDVTKYEIITNKGTKILTSPWHPFFVLTPDFKIVEKRADELKEGDILIGGMPDGEDYKFIFDYWLAGFIAGDGCFDKYHSHVKGHEYIYDRLRIYDYRIETFEIINDYLEKTFGRKYSIQKDRNIYYIDIKARNITSHYLKLLEGIDNGIPPQILKEGKNAVLSFIAGLFDAEGHVSNKPGIELGMVNKRLIEDVTHYLNALGIKARIREKLRKDGIDYVLHVEEYSSLLRFYELIGKNLQNEEKREKLEKVLSNHKGGNFGLPLNFNAFKEWASEYGVEFKTNGSQTIAIINDERISLGQWHTRNRVSKAVLVKMLRKLYEATKDEEVKRMLHLIEGLEVVRHITTTNEPRTFYDLTVENYQNYLAGENGMIFVHNTGLNFSKLRPEGDIVGTTTGAASGPVSFMHLIDAVSDVIKQGGVRRGANMGILEIWHPDIEKFIHAKEKNIGTNVLSNFNISVGIWEDFWEALKEGKKYPLINPRTGEVVKEVDPKTLFEELAYMAWAKADPGVIFFDVINRRNVLKKAKGGPIRATNPCVVGDTRILTPEGYLKAEEIFSLAKERGKKEAVAVEGIAEEGEPYAYSVEILLPGEEKVEYETVHGKVLAVADPVAVPAYVWKVGRKKVARVKTKEGYEITATLDHKLMTPEGWKEVGKLKEGDKILLPRFEVEEEFGSESIGEDLAFVLGWFIGDGYLNVNDKRAWFYFNAEKEEEIAVRIRDILVKHFGIKAELHRYGNQIKLGVRGEAYRWLENIVKNNEKRIPEIVYRLKPREIAAFLRGLFSADGYVDKDMAIRLTSKSRELLREVQDLLLLFGILSKIYEKPYESEFHYTTKNGEERIYRSKGYYELVITNYSRKLFAEKIGLEGYKMEKLSLKKTKVDQPIVTVESVEVLGEEIVYDFTVPNYHMYISNGFMSHNCGEEPLYEYESCNLASINLAKFVKYDENGKPYFDWDEYAYVIQKVAKYLDNSIDVNKFPLPEIDYNTKLTRRIGVGMMGLADALFKLGIPYNSEEGFKFMRKVTEYLTFYAYKYSVEAAKKRGTFPLYDKTEYPEGKLPVEGFYHPEIWNLPWDKLVEEIKKYGLRNAMVTTCPPTGSVSMIADTSSGIEPVYALVYKKSVTVGEFYYVDPVFEEELKKRGLYSEELLKKISDNYGSVQGLEEIPEDMQRVFVTALDIHWLDHIIAQASIQMWLTDSASKTINMINEATVEDVKAAYLIARFLGCKGVTVYRDGSLSVQVYSVEGEKKKRRFKPKPSEYAKKILLEIVEKEPWIKNFINVDEILNGKKEQLLFSLRPANESKLKVPGREEEVRPGNIPEEKIRELLGVVYCPVCYEKEGKLVELKMESGCATCPVCGWSKCVIS.

Residues 4 to 96 enclose the ATP-cone domain; the sequence is EKVMKRDGRI…LYRKKKAEIR (93 aa). Substrate is bound by residues threonine 257, 272-273, and glycine 301; that span reads AC. A disulfide bond links cysteine 273 and cysteine 1308. Residues 443–582 enclose the DOD-type homing endonuclease 1 domain; that stretch reads LAGFIAGDGC…VTHYLNALGI (140 aa). Residue asparagine 913 is the Proton acceptor of the active site. 913-914 serves as a coordination point for substrate; it reads NP. Residues 1063–1194 form the DOD-type homing endonuclease 2 domain; it reads VLGWFIGDGY…VQDLLLLFGI (132 aa). The active-site Cysteine radical intermediate is the cysteine 1297. Substrate is bound by residues 1297–1299 and 1471–1475; these read CGE and PTGSV. Glutamate 1299 acts as the Proton acceptor in catalysis.

It belongs to the ribonucleoside diphosphate reductase class-2 family. Adenosylcob(III)alamin serves as cofactor. This protein undergoes a protein self splicing that involves a post-translational excision of the intervening region (intein) followed by peptide ligation.

It catalyses the reaction a 2'-deoxyribonucleoside 5'-diphosphate + [thioredoxin]-disulfide + H2O = a ribonucleoside 5'-diphosphate + [thioredoxin]-dithiol. Functionally, provides the precursors necessary for DNA synthesis. Catalyzes the biosynthesis of deoxyribonucleotides from the corresponding ribonucleotides. This is Vitamin B12-dependent ribonucleoside-diphosphate reductase (rnr) from Pyrococcus furiosus (strain ATCC 43587 / DSM 3638 / JCM 8422 / Vc1).